The chain runs to 645 residues: Putative galactocerebrosidase (645 aa).

Positions methionine 1 to alanine 16 are cleaved as a signal peptide. Residues threonine 87 and tryptophan 128 each coordinate substrate. Asparagine 141 is a glycosylation site (N-linked (GlcNAc...) asparagine). Substrate is bound at residue asparagine 171. The active-site Proton donor/acceptor is the glutamate 172. Asparagine 174 and asparagine 193 each carry an N-linked (GlcNAc...) asparagine glycan. The active-site Nucleophile is the glutamate 248. A disulfide bridge links cysteine 261 with cysteine 365. 7 N-linked (GlcNAc...) asparagine glycosylation sites follow: asparagine 274, asparagine 395, asparagine 411, asparagine 532, asparagine 616, asparagine 620, and asparagine 638.

This sequence belongs to the glycosyl hydrolase 59 family.

The enzyme catalyses a beta-D-Gal-(1&lt;-&gt;1')-ceramide + H2O = an N-acyl-sphingoid base + D-galactose. The catalysed reaction is a beta-D-galactosyl-(1&lt;-&gt;1')-N-acylsphing-4-enine + H2O = an N-acylsphing-4-enine + D-galactose. In terms of biological role, hydrolyzes the galactose ester bonds of galactosylceramide, galactosylsphingoid base, lactosylceramide, and monogalactosyldiglyceride. C.elegans contain specific sphingoid bases, which are unique or different in structure compared to the sphingoid bases found in other animals. Two examples of these distinctive compounds are: 15-methylhexadecasphinganine and 15-methylhexadecasphing-4-enine. The chain is Putative galactocerebrosidase from Caenorhabditis elegans.